The sequence spans 270 residues: MSGDRRLQGLALKVGPLGEHDRLLTLLSDDVGVVRLAVPGARRPRSSLAAAVPLTCLDLQVVGRRGLARVRQLRVLRSYSGLGQRLDTLASAQALAELAIALVSSDDPVPGLLEAVLIHLDRLERLSRTPGEEADLCLANVVQAGVHLLALGGYGLPLQACCRSGAALTPPIGQWEWRCSVLPEEGLALGALAGARLQLNPSELALLQRLPRPDLPRRSNGELLGPRPVWLKLLALLECWCRAHLPRPVRSLAMVRDCLSAAPLSDHEPT.

It belongs to the RecO family.

Functionally, involved in DNA repair and RecF pathway recombination. The protein is DNA repair protein RecO of Synechococcus sp. (strain WH7803).